A 267-amino-acid chain; its full sequence is tRNA (guanine-N(1)-)-methyltransferase (267 aa).

S-adenosyl-L-methionine-binding positions include glycine 112 and 131–136 (IGDYIL). Basic and acidic residues predominate over residues 245–259 (DRRKEKNSYEDEFNR). A disordered region spans residues 245–267 (DRRKEKNSYEDEFNRRNYKRSTS).

The protein belongs to the RNA methyltransferase TrmD family. As to quaternary structure, homodimer.

It is found in the cytoplasm. The enzyme catalyses guanosine(37) in tRNA + S-adenosyl-L-methionine = N(1)-methylguanosine(37) in tRNA + S-adenosyl-L-homocysteine + H(+). Functionally, specifically methylates guanosine-37 in various tRNAs. The protein is tRNA (guanine-N(1)-)-methyltransferase of Spiroplasma kunkelii.